A 92-amino-acid polypeptide reads, in one-letter code: DNA-directed RNA polymerase subunit omega (92 aa).

It belongs to the RNA polymerase subunit omega family. In terms of assembly, the RNAP catalytic core consists of 2 alpha, 1 beta, 1 beta' and 1 omega subunit. When a sigma factor is associated with the core the holoenzyme is formed, which can initiate transcription.

The enzyme catalyses RNA(n) + a ribonucleoside 5'-triphosphate = RNA(n+1) + diphosphate. In terms of biological role, promotes RNA polymerase assembly. Latches the N- and C-terminal regions of the beta' subunit thereby facilitating its interaction with the beta and alpha subunits. This is DNA-directed RNA polymerase subunit omega from Shewanella baltica (strain OS223).